A 156-amino-acid polypeptide reads, in one-letter code: Peptidyl-prolyl cis-trans isomerase H (156 aa).

The 155-residue stretch at 1–155 (TPAGRLKCEL…MAVRITQCGE (155 aa)) folds into the PPIase cyclophilin-type domain.

It belongs to the cyclophilin-type PPIase family. PPIase H subfamily.

Its subcellular location is the nucleus. The catalysed reaction is [protein]-peptidylproline (omega=180) = [protein]-peptidylproline (omega=0). Its function is as follows. PPIases accelerate the folding of proteins. It catalyzes the cis-trans isomerization of proline imidic peptide bonds in oligopeptides. The sequence is that of Peptidyl-prolyl cis-trans isomerase H (CYP3) from Mycosarcoma maydis (Corn smut fungus).